Here is a 215-residue protein sequence, read N- to C-terminus: Chaperone protein TorD (215 aa).

The protein belongs to the TorD/DmsD family. TorD subfamily.

It localises to the cytoplasm. In terms of biological role, involved in the biogenesis of TorA. Acts on TorA before the insertion of the molybdenum cofactor and, as a result, probably favors a conformation of the apoenzyme that is competent for acquiring the cofactor. This Aliivibrio fischeri (strain ATCC 700601 / ES114) (Vibrio fischeri) protein is Chaperone protein TorD.